Consider the following 380-residue polypeptide: Aprataxin (380 aa).

One can recognise an FHA-like domain in the interval 36–85; it reads PVIIGRTPELGITDKLCSRSQLELTSNCYKRYVLVKRLGANTSQINGIDI. Positions 176–207 are disordered; it reads VYAFDSPSPMSSRCEKKAESNKRAPTHKHWSQ. Residues 188–197 show a composition bias toward basic and acidic residues; it reads RCEKKAESNK. An HIT domain is found at 206–312; that stretch reads SQGLKASMED…ISQDFQSSSF (107 aa). Interaction with DNA substrate stretches follow at residues 231-235 and 294-295; these read DKYPK and SM. The short motif at 297 to 301 is the Histidine triad motif element; the sequence is QMHMH. H299 functions as the Tele-AMP-histidine intermediate in the catalytic mechanism. The C2H2-type; atypical zinc-finger motif lies at 356 to 378; sequence LKCHRCKKPQKNIPTLKKHIDSC.

It is found in the nucleus. The protein resides in the nucleoplasm. The protein localises to the nucleolus. The catalysed reaction is a 5'-end adenosine-5'-diphospho-5'-2'-deoxyribonucleoside-DNA + H2O = a 5'-end 5'-phospho-2'-deoxyribonucleoside-DNA + AMP + 2 H(+). The enzyme catalyses a 5'-end adenosine-5'-diphospho-5'-ribonucleoside-2'-deoxyribonucleotide-DNA + H2O = a 5'-end 5'-phospho-ribonucleoside-2'-deoxyribonucleotide-DNA + AMP + 2 H(+). It carries out the reaction a 3'-end 2'-deoxyribonucleotide-3'-diphospho-5'-guanosine-DNA + H2O = a 3'-end 2'-deoxyribonucleotide 3'-phosphate-DNA + GMP + 2 H(+). Functionally, DNA-binding protein involved in single-strand DNA break repair, double-strand DNA break repair and base excision repair. Resolves abortive DNA ligation intermediates formed either at base excision sites, or when DNA ligases attempt to repair non-ligatable breaks induced by reactive oxygen species. Catalyzes the release of adenylate groups covalently linked to 5'-phosphate termini, resulting in the production of 5'-phosphate termini that can be efficiently rejoined. Also able to hydrolyze adenosine 5'-monophosphoramidate (AMP-NH(2)) and diadenosine tetraphosphate (AppppA), but with lower catalytic activity. Likewise, catalyzes the release of 3'-linked guanosine (DNAppG) and inosine (DNAppI) from DNA, but has higher specific activity with 5'-linked adenosine (AppDNA). This is Aprataxin (APTX) from Ciona intestinalis (Transparent sea squirt).